The sequence spans 145 residues: MLSAEEKAAVTSLFAKVKVDEVGGEALGRLLVVYPWTQRFFESFGDLSSADAILGNPKVKAHGKKVLDSFCEGLKQLDDLKGAFASLSELHCDKLHVDPENFRLLGNVLVVVLARRFGSEFSPELQASFQKVVTGVANALAHRYH.

Residues 1–145 (MLSAEEKAAV…VANALAHRYH (145 aa)) form the Globin domain. His-62 and His-91 together coordinate heme b.

It belongs to the globin family. Heterotetramer of two alpha chains and two beta chains. In terms of tissue distribution, red blood cells.

Involved in oxygen transport from the lung to the various peripheral tissues. In Bos taurus (Bovine), this protein is Hemoglobin fetal subunit beta.